Reading from the N-terminus, the 575-residue chain is FAD-linked oxidoreductase asqF (575 aa).

A signal peptide spans 1–23 (MALFRLSAAIVVIFLYIWSPSQR). Asparagine 45 and asparagine 80 each carry an N-linked (GlcNAc...) asparagine glycan. One can recognise an FAD-binding PCMH-type domain in the interval 118–306 (NQGRIPLYAA…VRVTMRTYPD (189 aa)). Histidine 156 carries the pros-8alpha-FAD histidine modification. Residue asparagine 370 is glycosylated (N-linked (GlcNAc...) asparagine).

The protein belongs to the oxygen-dependent FAD-linked oxidoreductase family. It depends on FAD as a cofactor.

The enzyme catalyses peniprequinolone + A = yaequinolone E + AH2. Its pathway is secondary metabolite biosynthesis. It participates in alkaloid biosynthesis. The protein operates within mycotoxin biosynthesis. In terms of biological role, FAD-linked oxidoreductase; part of the gene cluster that mediates the biosynthesis of the aspoquinolone mycotoxins. Within the pathway, asqF performs FAD-dependent dehydrogenation of the dimethylallyl quinolone peniprequinolone to yield the conjugated aryl diene yaequinolone E. The first step of the pathway is catalyzed by the nonribosomal peptide synthetase asqK that condenses anthranilic acid and O-methyl-L-tyrosine to produce 4'-methoxycyclopeptin. 4'-methoxycyclopeptin is then converted to 4'-methoxydehydrocyclopeptin by the ketoglutarate-dependent dioxygenase asqJ. AsqJ also converts its first product 4'-methoxydehydrocyclopeptin to 4'-methoxycyclopenin. The following conversion of 4'-methoxycyclopenin into 4'-methoxyviridicatin is catalyzed by the cyclopenase asqI. 4'-methoxyviridicatin is the precursor of quinolone natural products, and is further converted to quinolinone B. The prenyltransferase asqH1 then catalyzes the canonical Friedel-Crafts alkylation of quinolinone B with dimethylallyl cation to yield dimethylallyl quinolone, which is subjected to FAD-dependent dehydrogenation by the FAD-linked oxidoreductase asqF to yield conjugated aryl diene. The delta(3') double bond then serves as the site of the second alkylation with DMAPP catalyzed by the prenyltransferase asqH2 to yield a carbenium ion intermediate, which can be attacked by H(2)O to yield a styrenyl quinolone containing a C3'-hydroxyprenyl chain. The FAD-dependent monooxygenase asqG performs epoxidation of the terminal C7'-C8' olefin. Finally, after dehydratation of the epoxide at C3 by asqC, the quinolone epoxide rearrangement protein asqO catalyzes an enzymatic 3-exo-tet cyclization to yield the cyclopropyl-THF ring system in aspoquinolone. The polypeptide is FAD-linked oxidoreductase asqF (Emericella nidulans (strain FGSC A4 / ATCC 38163 / CBS 112.46 / NRRL 194 / M139) (Aspergillus nidulans)).